A 286-amino-acid chain; its full sequence is Oxidase hkm6 (286 aa).

Cu cation-binding residues include H16, H25, and H215.

This sequence belongs to the tyrosinase family. The cofactor is Cu(2+).

It functions in the pathway secondary metabolite biosynthesis. In terms of biological role, oxidase; part of the gene cluster that mediates the biosynthesis of hancockiamides, an unusual new family of N-cinnamoylated piperazines. The NRPS hkm10 and the NmrA-like reductase hkm9 are proposed to convert two molecules of L-Phe to the intermediary piperazine called xenocockiamide A. Xenocockiamide A is then converted to hancockiamide D via a series of hydroxylations and O-methylations. The tyrosinase hkm6 may catalyze an aromatic hydroxylation, then the 2-oxoglutarate-dependent Fe(II) dioxygenase hkm4 and the FAD-dependent phenol hydroxylase hkm7 may catalyze consecutive hydroxylations to install 2 more hydroxy groups, and the methyltransferase hkm8 probably catalyzes two methylations using 2 molecules of S-adenosyl-L-methionine (SAM). The NRPS hkm11 activates and transfers trans-cinnamate supplied by the PAL hkm12 to hancockiamide D and produces hancockiamide A. NRPS Hkm11 has the flexibility to tolerate the bulky hancockiamide G as a substrate and the absence of the acetyl-transferase hkm3 opens up the opportunity for hkm11 to introduce a second N-cinnamoyl moiety. The cytochrome P450 monooxygenase hkm5 catalyzes the methylenedioxy bridge formation, converting hancockiamide A into hancockiamide G. Hkm5 can also convert hancockiamide B into hancockiamide C, and hancockiamide D into hancockiamide H. The N-acetyltransferase hkm3 finally transfers an acetyl group to 1-N of piperazine, converting hancockiamide A into hancockiamide B and hancockiamide G into hancockiamide C. The protein is Oxidase hkm6 of Aspergillus hancockii.